Consider the following 309-residue polypeptide: Golgi-associated RAB2 interactor protein 1A (309 aa).

Phosphoserine occurs at positions 231, 263, and 267.

The protein belongs to the GARIN family. In terms of assembly, interacts (via N-terminus) with RAB2B (in GTP-bound form).

It localises to the golgi apparatus. Its function is as follows. RAB2B effector protein required for accurate acrosome formation and normal male fertility. In Homo sapiens (Human), this protein is Golgi-associated RAB2 interactor protein 1A.